We begin with the raw amino-acid sequence, 180 residues long: Inner membrane-spanning protein YciB (180 aa).

The next 5 helical transmembrane spans lie at 10–30 (IIAF…GVLM), 47–67 (ITTR…VTLL), 74–94 (IKMK…GGLI), 121–141 (YAWI…AEFW), and 151–171 (VFGI…YMYH).

Belongs to the YciB family.

Its subcellular location is the cell inner membrane. Plays a role in cell envelope biogenesis, maintenance of cell envelope integrity and membrane homeostasis. The sequence is that of Inner membrane-spanning protein YciB from Idiomarina loihiensis (strain ATCC BAA-735 / DSM 15497 / L2-TR).